The chain runs to 148 residues: MQLTVKALKGKEAHIQVSEGDTVLAVKRLVEEKLQVPVSQQRLLFRGKSLADEHCLSHYSIGPGSRLNLMVKDQVAPEGHSGNNTAWKSLSVILRKHFSPADAERVLEYVQKDYERSLSLLSLDDIERLATRILHPQYSEAADLGFLD.

A Ubiquitin-like domain is found at 1-76 (MQLTVKALKG…LNLMVKDQVA (76 aa)).

As to quaternary structure, component of the bag6/bat3 complex.

The protein resides in the cytoplasm. Its subcellular location is the cytosol. It localises to the nucleus. Its function is as follows. As part of a cytosolic protein quality control complex, the bag6/bat3 complex, maintains misfolded and hydrophobic patches-containing proteins in a soluble state and participates in their proper delivery to the endoplasmic reticulum or alternatively can promote their sorting to the proteasome where they undergo degradation. The bag6/bat3 complex is involved in the post-translational delivery of tail-anchored/type II transmembrane proteins to the endoplasmic reticulum membrane. Similarly, the bag6/bat3 complex also functions as a sorting platform for proteins of the secretory pathway that are mislocalized to the cytosol either delivering them to the proteasome for degradation or to the endoplasmic reticulum. The bag6/bat3 complex also plays a role in the endoplasmic reticulum-associated degradation (ERAD), a quality control mechanism that eliminates unwanted proteins of the endoplasmic reticulum through their retrotranslocation to the cytosol and their targeting to the proteasome. It maintains these retrotranslocated proteins in an unfolded yet soluble state condition in the cytosol to ensure their proper delivery to the proteasome. The polypeptide is Ubiquitin-like protein 4A (ubl4a) (Xenopus laevis (African clawed frog)).